The chain runs to 156 residues: MWKRSDHQPKIKAEDGPLVGQFEVLGSVPEPAMPHPLELSEFESFPVFQDIRLHIREVGAQLVKKVNAVFQLDITKNGKTILRWTIDLKNGSGDMYPGPARLPADTVFTIPESVFMELVLGKMNPQKAFLAGKFKVSGKVLLSWKLERVFKDWAKF.

Positions S44–F156 constitute an SCP2 domain.

This chain is SCP2 sterol-binding domain-containing protein 1 (SCP2D1), found in Homo sapiens (Human).